Consider the following 461-residue polypeptide: Alpha-L-fucosidase (461 aa).

Positions 1–18 (MKMIIIFFILLILNLIKS) are cleaved as a signal peptide.

The protein belongs to the glycosyl hydrolase 29 family.

It catalyses the reaction an alpha-L-fucoside + H2O = L-fucose + an alcohol. Alpha-L-fucosidase is responsible for hydrolyzing the alpha-1,6-linked fucose joined to the reducing-end N-acetylglucosamine of the carbohydrate moieties of glycoproteins. This Dictyostelium discoideum (Social amoeba) protein is Alpha-L-fucosidase (alfA).